The primary structure comprises 254 residues: Type III pantothenate kinase (254 aa).

Residue 6–13 (DVGNTNTT) coordinates ATP. Residues tyrosine 100 and 107–110 (GADR) contribute to the substrate site. Catalysis depends on aspartate 109, which acts as the Proton acceptor. Aspartate 129 contributes to the K(+) binding site. Threonine 132 is a binding site for ATP. Threonine 184 serves as a coordination point for substrate.

It belongs to the type III pantothenate kinase family. As to quaternary structure, homodimer. It depends on NH4(+) as a cofactor. Requires K(+) as cofactor.

The protein resides in the cytoplasm. The catalysed reaction is (R)-pantothenate + ATP = (R)-4'-phosphopantothenate + ADP + H(+). It functions in the pathway cofactor biosynthesis; coenzyme A biosynthesis; CoA from (R)-pantothenate: step 1/5. Functionally, catalyzes the phosphorylation of pantothenate (Pan), the first step in CoA biosynthesis. This Anaeromyxobacter dehalogenans (strain 2CP-C) protein is Type III pantothenate kinase.